Here is a 536-residue protein sequence, read N- to C-terminus: Putative ATP-dependent RNA helicase L364 (536 aa).

The region spanning 47 to 214 (ISILLKYFLV…IPFYLMNFIP (168 aa)) is the Helicase ATP-binding domain. An ATP-binding site is contributed by 60-67 (SDTGVGKT). Positions 160 to 163 (DESH) match the DEAH box motif. Residues 288–334 (LSDDSDKIAEAYEEIAELMRELEEKKTQCKNHLAKIQKLKQEIELRK) adopt a coiled-coil conformation. Residues 338–486 (FIEQTQLYLE…ISAINDGDLE (149 aa)) form the Helicase C-terminal domain. The disordered stretch occupies residues 502 to 536 (VLNEPVNNPIEEPVNDPVKDPVEDLTDNQPNIVEV).

This sequence belongs to the DEAD box helicase family. DEAH subfamily.

The enzyme catalyses ATP + H2O = ADP + phosphate + H(+). This chain is Putative ATP-dependent RNA helicase L364, found in Acanthamoeba polyphaga (Amoeba).